A 282-amino-acid chain; its full sequence is Phosphate import ATP-binding protein PstB (282 aa).

Residues M1–P25 show a composition bias toward polar residues. A disordered region spans residues M1 to A26. One can recognise an ABC transporter domain in the interval I36–V277. G68–S75 is an ATP binding site.

The protein belongs to the ABC transporter superfamily. Phosphate importer (TC 3.A.1.7) family. As to quaternary structure, the complex is composed of two ATP-binding proteins (PstB), two transmembrane proteins (PstC and PstA) and a solute-binding protein (PstS).

The protein localises to the cell inner membrane. The enzyme catalyses phosphate(out) + ATP + H2O = ADP + 2 phosphate(in) + H(+). Part of the ABC transporter complex PstSACB involved in phosphate import. Responsible for energy coupling to the transport system. The polypeptide is Phosphate import ATP-binding protein PstB (Rhodopirellula baltica (strain DSM 10527 / NCIMB 13988 / SH1)).